A 560-amino-acid chain; its full sequence is Chaperonin GroEL 2 (560 aa).

Residues T29–P32, K50, D86–T90, G414, and D494 contribute to the ATP site. The segment at E524–G546 is disordered. Residues G532–G546 show a composition bias toward gly residues.

It belongs to the chaperonin (HSP60) family. As to quaternary structure, forms a cylinder of 14 subunits composed of two heptameric rings stacked back-to-back. Interacts with the co-chaperonin GroES.

It localises to the cytoplasm. The catalysed reaction is ATP + H2O + a folded polypeptide = ADP + phosphate + an unfolded polypeptide.. Together with its co-chaperonin GroES, plays an essential role in assisting protein folding. The GroEL-GroES system forms a nano-cage that allows encapsulation of the non-native substrate proteins and provides a physical environment optimized to promote and accelerate protein folding. The polypeptide is Chaperonin GroEL 2 (Salinibacter ruber (strain DSM 13855 / M31)).